The following is a 498-amino-acid chain: Signal recognition particle receptor FtsY (498 aa).

Disordered regions lie at residues methionine 1–serine 130 and lysine 147–serine 200. The segment covering alanine 36 to glutamate 46 has biased composition (low complexity). The segment covering serine 103 to glutamine 120 has biased composition (polar residues). GTP-binding positions include glycine 301–threonine 308, aspartate 383–arginine 387, and threonine 447–aspartate 450.

This sequence belongs to the GTP-binding SRP family. FtsY subfamily. Part of the signal recognition particle protein translocation system, which is composed of SRP and FtsY.

It is found in the cell membrane. Its subcellular location is the cytoplasm. The catalysed reaction is GTP + H2O = GDP + phosphate + H(+). Its function is as follows. Involved in targeting and insertion of nascent membrane proteins into the cytoplasmic membrane. Acts as a receptor for the complex formed by the signal recognition particle (SRP) and the ribosome-nascent chain (RNC). This is Signal recognition particle receptor FtsY from Streptococcus mutans serotype c (strain ATCC 700610 / UA159).